A 283-amino-acid chain; its full sequence is uncharacterized protein (283 aa).

This is an uncharacterized protein from Acanthamoeba polyphaga mimivirus (APMV).